The chain runs to 33 residues: Sucrose-6-phosphate hydrolase (33 aa).

Residue 15 to 18 (PLQE) participates in substrate binding. Glu-18 is an active-site residue.

Belongs to the glycosyl hydrolase 32 family.

It carries out the reaction Hydrolysis of terminal non-reducing beta-D-fructofuranoside residues in beta-D-fructofuranosides.. Its pathway is glycan biosynthesis; sucrose metabolism. This is Sucrose-6-phosphate hydrolase from Fusobacterium mortiferum.